The sequence spans 428 residues: ATP phosphoribosyltransferase regulatory subunit (428 aa).

This sequence belongs to the class-II aminoacyl-tRNA synthetase family. HisZ subfamily. Heteromultimer composed of HisG and HisZ subunits.

The protein resides in the cytoplasm. The protein operates within amino-acid biosynthesis; L-histidine biosynthesis; L-histidine from 5-phospho-alpha-D-ribose 1-diphosphate: step 1/9. Its function is as follows. Required for the first step of histidine biosynthesis. May allow the feedback regulation of ATP phosphoribosyltransferase activity by histidine. This chain is ATP phosphoribosyltransferase regulatory subunit, found in Syntrophotalea carbinolica (strain DSM 2380 / NBRC 103641 / GraBd1) (Pelobacter carbinolicus).